The chain runs to 326 residues: Acetyl-coenzyme A carboxylase carboxyl transferase subunit beta (326 aa).

One can recognise a CoA carboxyltransferase N-terminal domain in the interval 25 to 308 (LWVKCPASGE…RRDDRSTLQL (284 aa)). The tract at residues 298 to 326 (RRRDDRSTLQLTPPKTHAPKPPEPKVKPD) is disordered. The segment covering 317–326 (KPPEPKVKPD) has biased composition (basic and acidic residues).

Belongs to the AccD/PCCB family. In terms of assembly, acetyl-CoA carboxylase is a heterohexamer composed of biotin carboxyl carrier protein (AccB), biotin carboxylase (AccC) and two subunits each of ACCase subunit alpha (AccA) and ACCase subunit beta (AccD).

It is found in the cytoplasm. It catalyses the reaction N(6)-carboxybiotinyl-L-lysyl-[protein] + acetyl-CoA = N(6)-biotinyl-L-lysyl-[protein] + malonyl-CoA. The protein operates within lipid metabolism; malonyl-CoA biosynthesis; malonyl-CoA from acetyl-CoA: step 1/1. Component of the acetyl coenzyme A carboxylase (ACC) complex. Biotin carboxylase (BC) catalyzes the carboxylation of biotin on its carrier protein (BCCP) and then the CO(2) group is transferred by the transcarboxylase to acetyl-CoA to form malonyl-CoA. In Hyphomonas neptunium (strain ATCC 15444), this protein is Acetyl-coenzyme A carboxylase carboxyl transferase subunit beta.